Reading from the N-terminus, the 90-residue chain is Barrier-to-autointegration factor-like protein (90 aa).

In terms of assembly, homodimer. Heterodimerizes with BANF1.

The protein localises to the nucleus. The protein resides in the cytoplasm. In terms of biological role, may play a role in BANF1 regulation and influence tissue-specific roles of BANF1. This Mus musculus (Mouse) protein is Barrier-to-autointegration factor-like protein (Banf2).